Here is a 528-residue protein sequence, read N- to C-terminus: Glucans biosynthesis protein G 2 (528 aa).

The N-terminal stretch at 1 to 44 is a signal peptide; the sequence is MRLHLTFNHSTPATGRKNTKHTLFFGSMLACIISIISLVVPAYG.

It belongs to the OpgD/OpgG family.

The protein resides in the periplasm. It functions in the pathway glycan metabolism; osmoregulated periplasmic glucan (OPG) biosynthesis. Functionally, involved in the biosynthesis of osmoregulated periplasmic glucans (OPGs). This Shewanella oneidensis (strain ATCC 700550 / JCM 31522 / CIP 106686 / LMG 19005 / NCIMB 14063 / MR-1) protein is Glucans biosynthesis protein G 2 (opgG2).